Here is a 212-residue protein sequence, read N- to C-terminus: ATP phosphoribosyltransferase (212 aa).

It belongs to the ATP phosphoribosyltransferase family. Short subfamily. Heteromultimer composed of HisG and HisZ subunits.

It localises to the cytoplasm. The catalysed reaction is 1-(5-phospho-beta-D-ribosyl)-ATP + diphosphate = 5-phospho-alpha-D-ribose 1-diphosphate + ATP. The protein operates within amino-acid biosynthesis; L-histidine biosynthesis; L-histidine from 5-phospho-alpha-D-ribose 1-diphosphate: step 1/9. Its function is as follows. Catalyzes the condensation of ATP and 5-phosphoribose 1-diphosphate to form N'-(5'-phosphoribosyl)-ATP (PR-ATP). Has a crucial role in the pathway because the rate of histidine biosynthesis seems to be controlled primarily by regulation of HisG enzymatic activity. The chain is ATP phosphoribosyltransferase from Prochlorococcus marinus (strain MIT 9515).